Reading from the N-terminus, the 131-residue chain is ATP synthase epsilon chain, chloroplastic (131 aa).

The protein belongs to the ATPase epsilon chain family. As to quaternary structure, F-type ATPases have 2 components, CF(1) - the catalytic core - and CF(0) - the membrane proton channel. CF(1) has five subunits: alpha(3), beta(3), gamma(1), delta(1), epsilon(1). CF(0) has three main subunits: a, b and c.

Its subcellular location is the plastid. It is found in the chloroplast thylakoid membrane. Produces ATP from ADP in the presence of a proton gradient across the membrane. The chain is ATP synthase epsilon chain, chloroplastic from Cyanidioschyzon merolae (strain NIES-3377 / 10D) (Unicellular red alga).